Consider the following 90-residue polypeptide: Probable Fe(2+)-trafficking protein (90 aa).

This sequence belongs to the Fe(2+)-trafficking protein family. As to quaternary structure, monomer.

In terms of biological role, could be a mediator in iron transactions between iron acquisition and iron-requiring processes, such as synthesis and/or repair of Fe-S clusters in biosynthetic enzymes. This is Probable Fe(2+)-trafficking protein from Proteus mirabilis (strain HI4320).